Here is a 70-residue protein sequence, read N- to C-terminus: Adenylate kinase (70 aa).

Position 10–15 (10–15) interacts with ATP; it reads GAGKGT. Positions 30–59 are NMP; that stretch reads STGDLFRANISKQTELGKLAKSYMDKGELV. Residues T31, R36, and 57 to 59 contribute to the AMP site; that span reads ELV.

Belongs to the adenylate kinase family. As to quaternary structure, monomer.

The protein localises to the cytoplasm. The enzyme catalyses AMP + ATP = 2 ADP. It participates in purine metabolism; AMP biosynthesis via salvage pathway; AMP from ADP: step 1/1. Catalyzes the reversible transfer of the terminal phosphate group between ATP and AMP. Plays an important role in cellular energy homeostasis and in adenine nucleotide metabolism. This chain is Adenylate kinase (adk), found in Streptomyces scabiei.